The following is a 157-amino-acid chain: Histone H2B.3 (157 aa).

The disordered stretch occupies residues 1–64 (MAPKKEEKPA…DKKSKKKAKV (64 aa)). Residues 26 to 42 (KAVKAPKKKEKKAPAKK) are compositionally biased toward basic residues. Lys-153 is covalently cross-linked (Glycyl lysine isopeptide (Lys-Gly) (interchain with G-Cter in ubiquitin)).

Belongs to the histone H2B family. The nucleosome is a histone octamer containing two molecules each of H2A, H2B, H3 and H4 assembled in one H3-H4 heterotetramer and two H2A-H2B heterodimers. The octamer wraps approximately 147 bp of DNA. Post-translationally, monoubiquitinated to form H2BK143ub1; may give a specific tag for epigenetic transcriptional activation.

It is found in the nucleus. The protein localises to the chromosome. Core component of nucleosome. Nucleosomes wrap and compact DNA into chromatin, limiting DNA accessibility to the cellular machineries which require DNA as a template. Histones thereby play a central role in transcription regulation, DNA repair, DNA replication and chromosomal stability. DNA accessibility is regulated via a complex set of post-translational modifications of histones, also called histone code, and nucleosome remodeling. This is Histone H2B.3 from Volvox carteri (Green alga).